The chain runs to 647 residues: tRNA uridine 5-carboxymethylaminomethyl modification enzyme MnmG (647 aa).

FAD-binding positions include 22–27, valine 134, and serine 189; that span reads GAGHAG. 283–297 is an NAD(+) binding site; the sequence is GARYCPSIEDKIMRF. Glutamine 380 is an FAD binding site.

It belongs to the MnmG family. As to quaternary structure, homodimer. Heterotetramer of two MnmE and two MnmG subunits. It depends on FAD as a cofactor.

Its subcellular location is the cytoplasm. Functionally, NAD-binding protein involved in the addition of a carboxymethylaminomethyl (cmnm) group at the wobble position (U34) of certain tRNAs, forming tRNA-cmnm(5)s(2)U34. This Desulfotalea psychrophila (strain LSv54 / DSM 12343) protein is tRNA uridine 5-carboxymethylaminomethyl modification enzyme MnmG.